Reading from the N-terminus, the 557-residue chain is Interferon alpha/beta receptor 1 (557 aa).

Residues 1 to 27 (MMVVLLGATTLVLVAVAPWVLSAAAGG) form the signal peptide. Over 28–436 (KNLKSPQKVE…EKTKPGNTSK (409 aa)) the chain is Extracellular. 4 consecutive Fibronectin type-III domains span residues 32-126 (SPQK…FRKA), 127-227 (QIGP…TVEN), 231-329 (PPEN…TEIQ), and 331-432 (FLLP…TKPG). N-linked (GlcNAc...) asparagine glycans are attached at residues Asn50, Asn58, Asn81, Asn88, Asn110, and Asn172. Cys79 and Cys87 form a disulfide bridge. Cys199 and Cys220 are disulfide-bonded. A glycan (N-linked (GlcNAc...) asparagine) is linked at Asn254. Cys283 and Cys291 are joined by a disulfide. Residues Asn313, Asn314, Asn376, Asn416, and Asn433 are each glycosylated (N-linked (GlcNAc...) asparagine). An intrachain disulfide couples Cys403 to Cys426. Residues 437 to 457 (IWLIVGICIALFALPFVIYAA) form a helical membrane-spanning segment. Topologically, residues 458-557 (KVFLRCINYV…TSEELQQDFV (100 aa)) are cytoplasmic. Residue Cys463 is the site of S-palmitoyl cysteine attachment. 2 positions are modified to phosphotyrosine; by TYK2: Tyr466 and Tyr481. Positions 491-500 (LLSTSEEQIE) are important for interaction with TYK2. Ser495 carries the phosphoserine modification. Residues Lys501, Lys525, and Lys526 each participate in a glycyl lysine isopeptide (Lys-Gly) (interchain with G-Cter in ubiquitin) cross-link. The disordered stretch occupies residues 516–557 (ETNQTDEDHKKYSSQTSQDSGNYSNEDESESKTSEELQQDFV). Residues 528-539 (SSQTSQDSGNYS) are compositionally biased toward polar residues. The residue at position 535 (Ser535) is a Phosphoserine.

The protein belongs to the type II cytokine receptor family. In terms of assembly, heterodimer with IFNAR2; forming the receptor for type I interferon. Interacts with TYK2. Interacts with STAT1 and STAT2; the interaction requires its phosphorylation at Tyr-466. Interacts (serine-phosphorylated form) with FBXW11, the substrate recognition component of a SCF (SKP1-CUL1-F-box protein) E3 ubiquitin-protein ligase complex. Interacts with SHMT2; this promotes interaction with ABRAXAS2 and the BRISC complex. Interacts with TRIM10; this interaction prevents association between IFNAR1 and TYK2. Ubiquitinated, leading to its internalization and degradation. Polyubiquitinated via 'Lys-48'-linked and 'Lys-63'-linked ubiquitin chains, leading to receptor internalization and lysosomal degradation. The 'Lys-63'-linked ubiquitin chains are cleaved off by the BRISC complex. Post-translationally, phosphorylated on tyrosine residues in response to interferon-binding: phosphorylation by TYK2 tyrosine kinase creates docking sites for STAT proteins. Phosphorylated on serine residues in response to interferon binding; this promotes interaction with FBXW11 and ubiquitination. In terms of processing, palmitoylation at Cys-463 is required for the activation of STAT1 and STAT2. In terms of tissue distribution, IFN receptors are present in all tissues and even on the surface of most IFN-resistant cells. Isoform 1, isoform 2 and isoform 3 are expressed in the IFN-alpha sensitive myeloma cell line U266B1. Isoform 2 and isoform 3 are expressed in the IFN-alpha resistant myeloma cell line U266R. Isoform 1 is not expressed in IFN-alpha resistant myeloma cell line U266R.

It localises to the cell membrane. Its subcellular location is the late endosome. The protein localises to the lysosome. Its function is as follows. Together with IFNAR2, forms the heterodimeric receptor for type I interferons (including interferons alpha, beta, epsilon, omega and kappa). Type I interferon binding activates the JAK-STAT signaling cascade, resulting in transcriptional activation or repression of interferon-regulated genes that encode the effectors of the interferon response. Mechanistically, type I interferon-binding brings the IFNAR1 and IFNAR2 subunits into close proximity with one another, driving their associated Janus kinases (JAKs) (TYK2 bound to IFNAR1 and JAK1 bound to IFNAR2) to cross-phosphorylate one another. The activated kinases phosphorylate specific tyrosine residues on the intracellular domains of IFNAR1 and IFNAR2, forming docking sites for the STAT transcription factors. STAT proteins are then phosphorylated by the JAKs, promoting their translocation into the nucleus to regulate expression of interferon-regulated genes. Can also act independently of IFNAR2: form an active IFNB1 receptor by itself and activate a signaling cascade that does not involve activation of the JAK-STAT pathway. This is Interferon alpha/beta receptor 1 (IFNAR1) from Homo sapiens (Human).